The following is a 374-amino-acid chain: Lactoyl-CoA dehydratase subunit beta (374 aa).

The protein belongs to the FldB/FldC dehydratase alpha/beta subunit family. Heterodimer of an alpha (LcdA) and a beta (LcdB) subunit. [4Fe-4S] cluster is required as a cofactor. FMN serves as cofactor. The cofactor is riboflavin. Requires Mg(2+) as cofactor.

It catalyses the reaction (R)-lactoyl-CoA = acryloyl-CoA + H2O. It carries out the reaction (2R)-hydroxybutanoyl-CoA = (2E)-butenoyl-CoA + H2O. Its activity is regulated as follows. Activated by the LcdC protein. In terms of biological role, involved in the acrylate pathway for the conversion of D-lactic acid to propionic acid. Catalyzes the reversible dehydration of Lactoyl-CoA and 2-hydroxybutyroyl-CoA to acryloyl-CoA and crotonyl-CoA, respectively. This is Lactoyl-CoA dehydratase subunit beta (lcdB) from Anaerotignum propionicum (Clostridium propionicum).